The chain runs to 287 residues: MSGAKEVRTKIKSVQNTQKITKAMEMVAASKMRRAQERMEATRPYAQKMRQVIGHLAGANPDYRHPFLEEREKVERVGLVVISTDRGLCGGLNVNLFKSVLQQMREWDKQGVGVDFCTFGAKAAAFFGRLGASTLADTRGLGDTPHLEDMIGPIKVMLDAYTEGKIDRLYLVHNDFVNTMSQEAATRRLLPVEPVDEEEMLENWDYIYEPSASELLDDVLMRYIESQVYQGVVENVACEMAARMVAMKSATDNAGEIIDNLQLVYNKARQAAITQELSEIVAGANAV.

It belongs to the ATPase gamma chain family. In terms of assembly, F-type ATPases have 2 components, CF(1) - the catalytic core - and CF(0) - the membrane proton channel. CF(1) has five subunits: alpha(3), beta(3), gamma(1), delta(1), epsilon(1). CF(0) has three main subunits: a, b and c.

The protein localises to the cell inner membrane. Functionally, produces ATP from ADP in the presence of a proton gradient across the membrane. The gamma chain is believed to be important in regulating ATPase activity and the flow of protons through the CF(0) complex. This is ATP synthase gamma chain from Alkalilimnicola ehrlichii (strain ATCC BAA-1101 / DSM 17681 / MLHE-1).